The primary structure comprises 577 residues: Urease subunit alpha (577 aa).

Residues 136–577 (GAIDCHVHLI…LPMAQRYFLF (442 aa)) form the Urease domain. Ni(2+) contacts are provided by His-141, His-143, and Lys-224. Residue Lys-224 is modified to N6-carboxylysine. His-226 is a binding site for substrate. Positions 253 and 279 each coordinate Ni(2+). His-327 functions as the Proton donor in the catalytic mechanism. Ni(2+) is bound at residue Asp-367.

This sequence belongs to the metallo-dependent hydrolases superfamily. Urease alpha subunit family. As to quaternary structure, heterotrimer of UreA (gamma), UreB (beta) and UreC (alpha) subunits. Three heterotrimers associate to form the active enzyme. Ni cation serves as cofactor. In terms of processing, carboxylation allows a single lysine to coordinate two nickel ions.

It is found in the cytoplasm. The enzyme catalyses urea + 2 H2O + H(+) = hydrogencarbonate + 2 NH4(+). The protein operates within nitrogen metabolism; urea degradation; CO(2) and NH(3) from urea (urease route): step 1/1. The chain is Urease subunit alpha from Mycobacterium marinum (strain ATCC BAA-535 / M).